A 485-amino-acid chain; its full sequence is Alpha-amylase (485 aa).

Positions 1 to 18 (MQHLSILLVVLGSSIAFA) are cleaved as a signal peptide. A Pyrrolidone carboxylic acid modification is found at Gln19. Cys46 and Cys102 form a disulfide bridge. 3 residues coordinate Ca(2+): Asn116, Arg163, and Asp172. Residues Cys152 and Cys165 are joined by a disulfide bond. Residue Arg200 participates in chloride binding. The Nucleophile role is filled by Asp202. His206 provides a ligand contact to Ca(2+). Glu238 serves as the catalytic Proton donor. A chloride-binding site is contributed by Asn301. An intrachain disulfide couples Cys369 to Cys375. 2 N-linked (GlcNAc...) asparagine glycosylation sites follow: Asn423 and Asn449. Cys440 and Cys452 form a disulfide bridge.

Belongs to the glycosyl hydrolase 13 family. Monomer. Ca(2+) serves as cofactor. It depends on chloride as a cofactor.

The catalysed reaction is Endohydrolysis of (1-&gt;4)-alpha-D-glucosidic linkages in polysaccharides containing three or more (1-&gt;4)-alpha-linked D-glucose units.. In terms of biological role, involved in the digestion of starch. The chain is Alpha-amylase from Hypothenemus hampei (Coffee berry borer).